We begin with the raw amino-acid sequence, 119 residues long: UPF0102 protein Athe_0977 (119 aa).

The protein belongs to the UPF0102 family.

This chain is UPF0102 protein Athe_0977, found in Caldicellulosiruptor bescii (strain ATCC BAA-1888 / DSM 6725 / KCTC 15123 / Z-1320) (Anaerocellum thermophilum).